Reading from the N-terminus, the 891-residue chain is uncharacterized protein (891 aa).

Residues 48-64 are compositionally biased toward basic and acidic residues; sequence GHKKPRSESRKKYDAKK. The interval 48–86 is disordered; that stretch reads GHKKPRSESRKKYDAKKQHQSSHFATPVKGVESSEPTEK. A phosphoserine mark is found at Ser261, Ser263, Ser265, and Ser268. The interval 795 to 822 is disordered; that stretch reads QRTFSNESPRAVDSGFSRTSTPFSESTS. Residues 810 to 822 show a composition bias toward polar residues; sequence FSRTSTPFSESTS.

The protein resides in the nucleus. This is an uncharacterized protein from Schizosaccharomyces pombe (strain 972 / ATCC 24843) (Fission yeast).